Consider the following 156-residue polypeptide: ATP synthase subunit b (156 aa).

The chain crosses the membrane as a helical span at residues 3–23 (ITFTIFAQSLAFAALIWIVAT).

This sequence belongs to the ATPase B chain family. In terms of assembly, F-type ATPases have 2 components, F(1) - the catalytic core - and F(0) - the membrane proton channel. F(1) has five subunits: alpha(3), beta(3), gamma(1), delta(1), epsilon(1). F(0) has three main subunits: a(1), b(2) and c(10-14). The alpha and beta chains form an alternating ring which encloses part of the gamma chain. F(1) is attached to F(0) by a central stalk formed by the gamma and epsilon chains, while a peripheral stalk is formed by the delta and b chains.

Its subcellular location is the cell inner membrane. F(1)F(0) ATP synthase produces ATP from ADP in the presence of a proton or sodium gradient. F-type ATPases consist of two structural domains, F(1) containing the extramembraneous catalytic core and F(0) containing the membrane proton channel, linked together by a central stalk and a peripheral stalk. During catalysis, ATP synthesis in the catalytic domain of F(1) is coupled via a rotary mechanism of the central stalk subunits to proton translocation. Functionally, component of the F(0) channel, it forms part of the peripheral stalk, linking F(1) to F(0). This chain is ATP synthase subunit b, found in Xylella fastidiosa (strain 9a5c).